Here is a 244-residue protein sequence, read N- to C-terminus: Na(+)-translocating NADH-quinone reductase subunit E (244 aa).

Helical transmembrane passes span 11-31, 50-70, 90-110, 123-143, 153-173, and 191-211; these read LLGIFLQATFIQNILLSTFLG, MSVALVLTITGSINWLVHYFI, FLELIMFIVVIAAFTQILELL, GIFLPLIAVNCAILGGVLFGI, VVFSLGSGCGWWLAIVLFATI, and ISFITTGLMAMAFMGLTGIDI.

This sequence belongs to the NqrDE/RnfAE family. In terms of assembly, composed of six subunits; NqrA, NqrB, NqrC, NqrD, NqrE and NqrF.

The protein resides in the cell inner membrane. The catalysed reaction is a ubiquinone + n Na(+)(in) + NADH + H(+) = a ubiquinol + n Na(+)(out) + NAD(+). Its function is as follows. NQR complex catalyzes the reduction of ubiquinone-1 to ubiquinol by two successive reactions, coupled with the transport of Na(+) ions from the cytoplasm to the periplasm. NqrA to NqrE are probably involved in the second step, the conversion of ubisemiquinone to ubiquinol. This is Na(+)-translocating NADH-quinone reductase subunit E from Chlamydia trachomatis serovar L2 (strain ATCC VR-902B / DSM 19102 / 434/Bu).